The following is a 408-amino-acid chain: Tryptophan--tRNA ligase, chloroplastic/mitochondrial (408 aa).

The transit peptide at 1-52 directs the protein to the chloroplast and mitochondrion; the sequence is MGHATSLSHFLILSSSRFSRLGSLTRLLSKPTSLSGSFSSISVTGQGFRCCC. Serine 53 bears the N-acetylserine mark. Residues glutamine 72 and 78 to 81 contribute to the ATP site; that span reads HLGN. The 'HIGH' region signature appears at 73–81; that stretch reads PTGSVHLGN. Aspartate 197 contacts L-tryptophan. ATP is bound by residues 209–211, valine 260, 269–273, and lysine 272; these read GED and KMSKS. A 'KMSKS' region motif is present at residues 269–273; it reads KMSKS.

The protein belongs to the class-I aminoacyl-tRNA synthetase family.

The protein resides in the plastid. It is found in the chloroplast. It localises to the mitochondrion. It carries out the reaction tRNA(Trp) + L-tryptophan + ATP = L-tryptophyl-tRNA(Trp) + AMP + diphosphate + H(+). The chain is Tryptophan--tRNA ligase, chloroplastic/mitochondrial from Arabidopsis thaliana (Mouse-ear cress).